Here is a 65-residue protein sequence, read N- to C-terminus: Prokaryotic ubiquitin-like protein Pup (65 aa).

Residues 1 to 13 (MAQEQKQPRKSSE) are compositionally biased toward basic and acidic residues. Residues 1 to 34 (MAQEQKQPRKSSEADEAVEAVAETDVSERKEALD) form a disordered region. Positions 21-59 (VAETDVSERKEALDSDVDDILDEIDDVLETNAEDFVKSF) are ARC ATPase binding. A coiled-coil region spans residues 25–49 (DVSERKEALDSDVDDILDEIDDVLE). Residue E65 forms an Isoglutamyl lysine isopeptide (Glu-Lys) (interchain with K-? in acceptor proteins) linkage.

The protein belongs to the prokaryotic ubiquitin-like protein family. Strongly interacts with the proteasome-associated ATPase ARC through a hydrophobic interface; the interacting region of Pup lies in its C-terminal half. There is one Pup binding site per ARC hexamer ring.

It functions in the pathway protein degradation; proteasomal Pup-dependent pathway. Its function is as follows. Protein modifier that is covalently attached to lysine residues of substrate proteins, thereby targeting them for proteasomal degradation. The tagging system is termed pupylation. This Nocardioides sp. (strain ATCC BAA-499 / JS614) protein is Prokaryotic ubiquitin-like protein Pup.